The sequence spans 130 residues: Small ribosomal subunit protein uS11 (130 aa).

It belongs to the universal ribosomal protein uS11 family. As to quaternary structure, part of the 30S ribosomal subunit. Interacts with proteins S7 and S18. Binds to IF-3.

Located on the platform of the 30S subunit, it bridges several disparate RNA helices of the 16S rRNA. Forms part of the Shine-Dalgarno cleft in the 70S ribosome. The chain is Small ribosomal subunit protein uS11 from Syntrophomonas wolfei subsp. wolfei (strain DSM 2245B / Goettingen).